The sequence spans 279 residues: Lectin 9 (279 aa).

A signal peptide spans 1 to 23 (MALSSALIKIFITFLFLQNHVNS). N-linked (GlcNAc...) asparagine glycans are attached at residues asparagine 116, asparagine 139, asparagine 235, and asparagine 272.

Belongs to the leguminous lectin family.

Its function is as follows. May be involved in arbuscular mycorrhizal (AM) symbiosis with AM fungi. The protein is Lectin 9 of Medicago truncatula (Barrel medic).